We begin with the raw amino-acid sequence, 443 residues long: Chromosomal replication initiator protein DnaA (443 aa).

The domain I, interacts with DnaA modulators stretch occupies residues 1 to 76 (METKALWEKL…KSVLNSYVSV (76 aa)). The domain II stretch occupies residues 76-99 (VDFLTKEIFEKNTKKENKKEPINT). The tract at residues 100–320 (VLSENALTFE…GLVNRLLFFG (221 aa)) is domain III, AAA+ region. ATP-binding residues include Gly-145, Gly-147, Lys-148, and Thr-149. Residues 321–443 (IQNDLGHIID…ESLKNEIIGK (123 aa)) form a domain IV, binds dsDNA region.

This sequence belongs to the DnaA family. As to quaternary structure, oligomerizes as a right-handed, spiral filament on DNA at oriC.

The protein resides in the cytoplasm. Its function is as follows. Plays an essential role in the initiation and regulation of chromosomal replication. ATP-DnaA binds to the origin of replication (oriC) to initiate formation of the DNA replication initiation complex once per cell cycle. Binds the DnaA box (a 9 base pair repeat at the origin) and separates the double-stranded (ds)DNA. Forms a right-handed helical filament on oriC DNA; dsDNA binds to the exterior of the filament while single-stranded (ss)DNA is stabiized in the filament's interior. The ATP-DnaA-oriC complex binds and stabilizes one strand of the AT-rich DNA unwinding element (DUE), permitting loading of DNA polymerase. After initiation quickly degrades to an ADP-DnaA complex that is not apt for DNA replication. Binds acidic phospholipids. This is Chromosomal replication initiator protein DnaA from Mesoplasma florum (strain ATCC 33453 / NBRC 100688 / NCTC 11704 / L1) (Acholeplasma florum).